A 450-amino-acid chain; its full sequence is Na(+)/H(+) antiporter NhaA 2 (450 aa).

A run of 12 helical transmembrane segments spans residues 43–63 (VGGA…NSPW), 86–106 (LTLG…VVGL), 124–144 (ALPM…FVAV), 155–175 (GWAI…AVIS), 185–205 (FLLT…AVFY), 208–228 (EINL…ALCV), 234–254 (SWWL…ESGV), 258–278 (VAGV…AGGP), 299–319 (VAVP…VSGL), 326–346 (PITL…IFLT), 364–384 (WIDV…SLLI), and 398–418 (FVKV…AVLL).

Belongs to the NhaA Na(+)/H(+) (TC 2.A.33) antiporter family.

The protein resides in the cell membrane. The catalysed reaction is Na(+)(in) + 2 H(+)(out) = Na(+)(out) + 2 H(+)(in). Na(+)/H(+) antiporter that extrudes sodium in exchange for external protons. This is Na(+)/H(+) antiporter NhaA 2 from Mycobacterium sp. (strain KMS).